Reading from the N-terminus, the 133-residue chain is Small ribosomal subunit protein uS8 (133 aa).

The disordered stretch occupies residues 1–28 (MANHDPISDMLTRIRNASEKRHEKTKVP). Basic and acidic residues predominate over residues 16–26 (NASEKRHEKTK).

The protein belongs to the universal ribosomal protein uS8 family. Part of the 30S ribosomal subunit. Contacts proteins S5 and S12.

One of the primary rRNA binding proteins, it binds directly to 16S rRNA central domain where it helps coordinate assembly of the platform of the 30S subunit. The chain is Small ribosomal subunit protein uS8 from Prochlorococcus marinus (strain NATL1A).